The chain runs to 476 residues: Glycogen synthase (476 aa).

Lys-15 serves as a coordination point for ADP-alpha-D-glucose.

Belongs to the glycosyltransferase 1 family. Bacterial/plant glycogen synthase subfamily.

It catalyses the reaction [(1-&gt;4)-alpha-D-glucosyl](n) + ADP-alpha-D-glucose = [(1-&gt;4)-alpha-D-glucosyl](n+1) + ADP + H(+). Its pathway is glycan biosynthesis; glycogen biosynthesis. Its function is as follows. Synthesizes alpha-1,4-glucan chains using ADP-glucose. This Streptococcus mutans serotype c (strain ATCC 700610 / UA159) protein is Glycogen synthase.